Reading from the N-terminus, the 238-residue chain is Transcription termination/antitermination protein NusG (238 aa).

This sequence belongs to the NusG family.

In terms of biological role, participates in transcription elongation, termination and antitermination. The polypeptide is Transcription termination/antitermination protein NusG (Mycobacterium tuberculosis (strain CDC 1551 / Oshkosh)).